The primary structure comprises 173 residues: Translation initiation factor IF-3 (173 aa).

This sequence belongs to the IF-3 family. In terms of assembly, monomer.

The protein resides in the cytoplasm. Functionally, IF-3 binds to the 30S ribosomal subunit and shifts the equilibrium between 70S ribosomes and their 50S and 30S subunits in favor of the free subunits, thus enhancing the availability of 30S subunits on which protein synthesis initiation begins. This chain is Translation initiation factor IF-3, found in Ehrlichia chaffeensis (strain ATCC CRL-10679 / Arkansas).